The following is a 427-amino-acid chain: Glutamate-1-semialdehyde 2,1-aminomutase (427 aa).

Lysine 265 is modified (N6-(pyridoxal phosphate)lysine).

Belongs to the class-III pyridoxal-phosphate-dependent aminotransferase family. HemL subfamily. Homodimer. Pyridoxal 5'-phosphate is required as a cofactor.

It localises to the cytoplasm. The catalysed reaction is (S)-4-amino-5-oxopentanoate = 5-aminolevulinate. It functions in the pathway porphyrin-containing compound metabolism; protoporphyrin-IX biosynthesis; 5-aminolevulinate from L-glutamyl-tRNA(Glu): step 2/2. The sequence is that of Glutamate-1-semialdehyde 2,1-aminomutase from Neisseria meningitidis serogroup C (strain 053442).